A 514-amino-acid polypeptide reads, in one-letter code: Maturase K (514 aa).

This sequence belongs to the intron maturase 2 family. MatK subfamily.

It localises to the plastid. It is found in the chloroplast. Its function is as follows. Usually encoded in the trnK tRNA gene intron. Probably assists in splicing its own and other chloroplast group II introns. The protein is Maturase K of Erythronium grandiflorum (Yellow avalanche-lily).